The primary structure comprises 536 residues: CTP synthase (536 aa).

The segment at 1–267 is amidoligase domain; it reads MSKFVFVTGG…CKETLRCLDL (267 aa). Ser-13 contacts CTP. A UTP-binding site is contributed by Ser-13. ATP contacts are provided by residues 14–19 and Asp-71; that span reads SIGKGI. Mg(2+) contacts are provided by Asp-71 and Glu-141. CTP-binding positions include 148–150, 188–193, and Lys-224; these read DIE and KTKPTQ. Residues 188–193 and Lys-224 contribute to the UTP site; that span reads KTKPTQ. Residues 292–534 enclose the Glutamine amidotransferase type-1 domain; that stretch reads KVALVGKYIE…IKASREKLEQ (243 aa). Gly-354 contacts L-glutamine. Cys-381 (nucleophile; for glutamine hydrolysis) is an active-site residue. Residues 382-385, Glu-405, and Arg-462 each bind L-glutamine; that span reads LGMQ. Active-site residues include His-507 and Glu-509.

Belongs to the CTP synthase family. As to quaternary structure, homotetramer.

The catalysed reaction is UTP + L-glutamine + ATP + H2O = CTP + L-glutamate + ADP + phosphate + 2 H(+). The enzyme catalyses L-glutamine + H2O = L-glutamate + NH4(+). It carries out the reaction UTP + NH4(+) + ATP = CTP + ADP + phosphate + 2 H(+). It functions in the pathway pyrimidine metabolism; CTP biosynthesis via de novo pathway; CTP from UDP: step 2/2. Allosterically activated by GTP, when glutamine is the substrate; GTP has no effect on the reaction when ammonia is the substrate. The allosteric effector GTP functions by stabilizing the protein conformation that binds the tetrahedral intermediate(s) formed during glutamine hydrolysis. Inhibited by the product CTP, via allosteric rather than competitive inhibition. Functionally, catalyzes the ATP-dependent amination of UTP to CTP with either L-glutamine or ammonia as the source of nitrogen. Regulates intracellular CTP levels through interactions with the four ribonucleotide triphosphates. This is CTP synthase from Prochlorococcus marinus (strain MIT 9515).